Here is a 293-residue protein sequence, read N- to C-terminus: MATH domain and coiled-coil domain-containing protein At3g58400 (293 aa).

In terms of domain architecture, MATH spans 3-126 (RSRSQNLITE…NGELKIVAEI (124 aa)). Residues 227–285 (KLDWLENKLYEVAQKKEDDEAGETRLREMEEKLKDLKLKCSKMEALVEEEKAKVSAAKA) are a coiled coil.

This Arabidopsis thaliana (Mouse-ear cress) protein is MATH domain and coiled-coil domain-containing protein At3g58400.